A 556-amino-acid polypeptide reads, in one-letter code: Small ribosomal subunit protein bS1 (556 aa).

S1 motif domains lie at 35 to 105 (TIKE…ISQQ), 120 to 183 (NAII…ISRK), 204 to 272 (TEPV…LSIK), 289 to 359 (GYAI…VSLK), 377 to 444 (DVLE…LSAK), and 461 to 525 (DSVI…ASVH).

The protein belongs to the bacterial ribosomal protein bS1 family.

Its function is as follows. Binds mRNA; thus facilitating recognition of the initiation point. It is needed to translate mRNA with a short Shine-Dalgarno (SD) purine-rich sequence. The chain is Small ribosomal subunit protein bS1 (rpsA) from Helicobacter pylori (strain ATCC 700392 / 26695) (Campylobacter pylori).